The chain runs to 406 residues: MNQPPKPNSFRSGPDEEGRFGIFGGRFVAETLMPLILDLQDEWARAKNDPAFKAELENLGTHYIGRPSPLYFAERLTAELGGAKIYFKREELNHTGSHKINNCIGQILLAKRMGKTRIIAETGAGQHGVASATVAARFGLPCVVYMGATDVERQAPNVFRMKLLGAEVKPVTAGNGTLKDAMNEALRDWVTNVDSTYYLIGTAAGPHPYPEMVRDFQAVIGEEAKQQILEAEGRLPDLVVAAVGGGSNAIGIFHSFLDDEGVRIVGVEAGGKGLDGDEHCASLTAGSPGVLHGNRTYLLQDGDGQIKEGHSISAGLDYPGIGPEHAWLNDIGRVEYVPIMDHEALEAFQTLTRLEGIIPALEPSHALAEVIKRAPKMGKDEIILMNLSGRGDKDIFTVGKILGMGQ.

K99 carries the post-translational modification N6-(pyridoxal phosphate)lysine.

Belongs to the TrpB family. As to quaternary structure, tetramer of two alpha and two beta chains. It depends on pyridoxal 5'-phosphate as a cofactor.

It catalyses the reaction (1S,2R)-1-C-(indol-3-yl)glycerol 3-phosphate + L-serine = D-glyceraldehyde 3-phosphate + L-tryptophan + H2O. The protein operates within amino-acid biosynthesis; L-tryptophan biosynthesis; L-tryptophan from chorismate: step 5/5. The beta subunit is responsible for the synthesis of L-tryptophan from indole and L-serine. This Rhizobium meliloti (strain 1021) (Ensifer meliloti) protein is Tryptophan synthase beta chain.